The primary structure comprises 483 residues: Probable glycosyltransferase 4 (483 aa).

Residues 1–26 (MSKLQDRHGGEAAADVGRRARHQRLL) are Cytoplasmic-facing. A helical; Signal-anchor for type II membrane protein transmembrane segment spans residues 27–47 (LSFPVFPIVLLLLAPCTIFFF). Residues 48-483 (TSGDVPLPRI…KKTSRAARPM (436 aa)) lie on the Lumenal side of the membrane. A disordered region spans residues 71 to 119 (AVAADTSPPPPSPPSSSPPPLSFPPPPPPPSSPPPPALPVVDDHSDTQR). Pro residues predominate over residues 77–108 (SPPPPSPPSSSPPPLSFPPPPPPPSSPPPPAL). N-linked (GlcNAc...) asparagine glycosylation occurs at Asn448.

It belongs to the glycosyltransferase 34 family.

The protein resides in the golgi apparatus membrane. Probable glycosyltransferase that may be involved in the biosynthesis of xyloglucan. The sequence is that of Probable glycosyltransferase 4 from Oryza sativa subsp. indica (Rice).